A 320-amino-acid polypeptide reads, in one-letter code: Minor outer capsid protein P9 (320 aa).

The interval 297-320 is disordered; it reads RNDDEEELAGSEFTSLLSDDGRMG.

The protein belongs to the phytoreovirus minor outer capsid protein P9 family.

The protein localises to the virion. The protein resides in the host cytoplasm. Minor outer capsid protein. The sequence is that of Minor outer capsid protein P9 from Rice gall dwarf virus (RGDV).